A 151-amino-acid polypeptide reads, in one-letter code: Lipoprotein signal peptidase (151 aa).

3 consecutive transmembrane segments (helical) span residues leucine 3–valine 23, tryptophan 59–serine 79, and leucine 85–leucine 107. Residues aspartate 112 and aspartate 128 contribute to the active site. Residues isoleucine 123–leucine 143 traverse the membrane as a helical segment.

The protein belongs to the peptidase A8 family.

It localises to the cell membrane. It carries out the reaction Release of signal peptides from bacterial membrane prolipoproteins. Hydrolyzes -Xaa-Yaa-Zaa-|-(S,diacylglyceryl)Cys-, in which Xaa is hydrophobic (preferably Leu), and Yaa (Ala or Ser) and Zaa (Gly or Ala) have small, neutral side chains.. Its pathway is protein modification; lipoprotein biosynthesis (signal peptide cleavage). Its function is as follows. This protein specifically catalyzes the removal of signal peptides from prolipoproteins. The chain is Lipoprotein signal peptidase from Latilactobacillus sakei subsp. sakei (strain 23K) (Lactobacillus sakei subsp. sakei).